The following is a 731-amino-acid chain: 1,4-alpha-glucan branching enzyme GlgB (731 aa).

The Nucleophile role is filled by aspartate 408. Residue glutamate 461 is the Proton donor of the active site.

It belongs to the glycosyl hydrolase 13 family. GlgB subfamily. In terms of assembly, monomer.

The catalysed reaction is Transfers a segment of a (1-&gt;4)-alpha-D-glucan chain to a primary hydroxy group in a similar glucan chain.. It functions in the pathway glycan biosynthesis; glycogen biosynthesis. Functionally, catalyzes the formation of the alpha-1,6-glucosidic linkages in glycogen by scission of a 1,4-alpha-linked oligosaccharide from growing alpha-1,4-glucan chains and the subsequent attachment of the oligosaccharide to the alpha-1,6 position. The polypeptide is 1,4-alpha-glucan branching enzyme GlgB (Corynebacterium efficiens (strain DSM 44549 / YS-314 / AJ 12310 / JCM 11189 / NBRC 100395)).